Here is a 102-residue protein sequence, read N- to C-terminus: Large ribosomal subunit protein bL21 (102 aa).

It belongs to the bacterial ribosomal protein bL21 family. In terms of assembly, part of the 50S ribosomal subunit. Contacts protein L20.

This protein binds to 23S rRNA in the presence of protein L20. The chain is Large ribosomal subunit protein bL21 from Phytoplasma australiense.